Consider the following 218-residue polypeptide: Small ribosomal subunit protein uS3c (218 aa).

Positions 47–118 (VQKNMRIFSG…KLNIAITRIG (72 aa)) constitute a KH type-2 domain.

It belongs to the universal ribosomal protein uS3 family. As to quaternary structure, part of the 30S ribosomal subunit.

The protein resides in the plastid. It localises to the chloroplast. The chain is Small ribosomal subunit protein uS3c (rps3) from Cucumis sativus (Cucumber).